The following is a 1590-amino-acid chain: von Willebrand factor D and EGF domain-containing protein (1590 aa).

Positions 1–20 (MPGGACVLVIALMFLAWGEA) are cleaved as a signal peptide. A glycan (N-linked (GlcNAc...) asparagine) is linked at Asn367. Residues 423–606 (AYCYTFTDPH…EWRILPGKSM (184 aa)) enclose the VWFD domain. Cystine bridges form between Cys425/Cys565 and Cys468/Cys477. 2 N-linked (GlcNAc...) asparagine glycosylation sites follow: Asn703 and Asn968. One can recognise an EGF-like 1 domain in the interval 1177–1216 (TVKSCDCLNGGSCVSDRNFSPGSGVYLCVCLPGFHGSLCE). 3 disulfides stabilise this stretch: Cys1181-Cys1189, Cys1183-Cys1204, and Cys1206-Cys1215. Over residues 1268–1280 (DKSVNKEEDDKNA) the composition is skewed to basic and acidic residues. Residues 1268–1288 (DKSVNKEEDDKNAQGRKRHVK) form a disordered region. EGF-like domains are found at residues 1294–1326 (AFTICKYPCGKSRECVAPNICKCKPGYIGSNCQ), 1358–1390 (DEEHCNPPCQHGGTCLAGNLCTCPYGFVGPRCE), 1422–1454 (STALCDPVCLNGGSCNKPNTCLCPNGFFGEHCQ), 1455–1486 (NAFCHPPCKNGGHCMRNNVCVCREGYTGRRFQ), 1518–1550 (NTPICLQKCKNGGECIAPSICHCPSSWEGVRCQ), and 1551–1582 (IPICNPKCLYGGRCIFPNVCSCRTEYSGVKCE). 17 disulfide bridges follow: Cys1298–Cys1308, Cys1302–Cys1314, Cys1316–Cys1325, Cys1362–Cys1372, Cys1366–Cys1378, Cys1380–Cys1389, Cys1426–Cys1436, Cys1430–Cys1442, Cys1444–Cys1453, Cys1458–Cys1468, Cys1462–Cys1474, Cys1522–Cys1532, Cys1526–Cys1538, Cys1540–Cys1549, Cys1554–Cys1564, Cys1558–Cys1570, and Cys1572–Cys1581.

The protein localises to the secreted. The chain is von Willebrand factor D and EGF domain-containing protein (VWDE) from Homo sapiens (Human).